The following is a 402-amino-acid chain: Argininosuccinate synthase (402 aa).

Position 9 to 17 (alanine 9 to serine 17) interacts with ATP. Tyrosine 86 serves as a coordination point for L-citrulline. Glycine 116 lines the ATP pocket. L-aspartate is bound by residues threonine 118, asparagine 122, and aspartate 123. Asparagine 122 is a binding site for L-citrulline. Residues arginine 126, serine 174, serine 183, glutamate 259, and tyrosine 271 each contribute to the L-citrulline site.

The protein belongs to the argininosuccinate synthase family. Type 1 subfamily. As to quaternary structure, homotetramer.

The protein resides in the cytoplasm. It catalyses the reaction L-citrulline + L-aspartate + ATP = 2-(N(omega)-L-arginino)succinate + AMP + diphosphate + H(+). The protein operates within amino-acid biosynthesis; L-arginine biosynthesis; L-arginine from L-ornithine and carbamoyl phosphate: step 2/3. In Geobacillus sp. (strain WCH70), this protein is Argininosuccinate synthase.